We begin with the raw amino-acid sequence, 443 residues long: Amino-acid acetyltransferase (443 aa).

The 141-residue stretch at 296–436 (EQIRRATIND…KMYNYQRRSK (141 aa)) folds into the N-acetyltransferase domain.

This sequence belongs to the acetyltransferase family. ArgA subfamily. As to quaternary structure, homohexamer.

The protein resides in the cytoplasm. The catalysed reaction is L-glutamate + acetyl-CoA = N-acetyl-L-glutamate + CoA + H(+). The protein operates within amino-acid biosynthesis; L-arginine biosynthesis; N(2)-acetyl-L-ornithine from L-glutamate: step 1/4. The sequence is that of Amino-acid acetyltransferase from Salmonella arizonae (strain ATCC BAA-731 / CDC346-86 / RSK2980).